The primary structure comprises 86 residues: Putative defensin-like protein 234 (86 aa).

The signal sequence occupies residues 1–26 (MRSATLLLVSCVLLSFILGNVKEVEA). Cystine bridges form between Cys34-Cys86, Cys44-Cys71, Cys52-Cys80, and Cys69-Cys82.

The protein belongs to the DEFL family.

The protein localises to the secreted. This chain is Putative defensin-like protein 234 (SCRL14), found in Arabidopsis thaliana (Mouse-ear cress).